The following is a 131-amino-acid chain: Small ribosomal subunit protein uS11 (131 aa).

It belongs to the universal ribosomal protein uS11 family. Part of the 30S ribosomal subunit. Interacts with proteins S7 and S18. Binds to IF-3.

Located on the platform of the 30S subunit, it bridges several disparate RNA helices of the 16S rRNA. Forms part of the Shine-Dalgarno cleft in the 70S ribosome. The chain is Small ribosomal subunit protein uS11 from Helicobacter pylori (strain Shi470).